A 244-amino-acid chain; its full sequence is MIVIPAIDLKEGKCVRLEQGLMEKDTVFCDNPADQAREWERQGAELLHIVDLDGAFAGEPKNRASIEAIVKAIAIPTQLGGGIRDIPTIEAYLSLGIGRVILGTAAQRNPELVEEACRLFPGRIVVGIDAKNGMVAVQGWAEVTGVTAVDLAKRFEGYGVAAIIYTDIARDGMMQGPNIEATRALAEAISIPVIASGGVSSLKDIENLMAIETSGIAGAITGKAVYTGAINLAEAVALTKRGGA.

Asp-8 serves as the catalytic Proton acceptor. Residue Asp-129 is the Proton donor of the active site.

Belongs to the HisA/HisF family.

The protein localises to the cytoplasm. The catalysed reaction is 1-(5-phospho-beta-D-ribosyl)-5-[(5-phospho-beta-D-ribosylamino)methylideneamino]imidazole-4-carboxamide = 5-[(5-phospho-1-deoxy-D-ribulos-1-ylimino)methylamino]-1-(5-phospho-beta-D-ribosyl)imidazole-4-carboxamide. It participates in amino-acid biosynthesis; L-histidine biosynthesis; L-histidine from 5-phospho-alpha-D-ribose 1-diphosphate: step 4/9. This chain is 1-(5-phosphoribosyl)-5-[(5-phosphoribosylamino)methylideneamino] imidazole-4-carboxamide isomerase, found in Geobacter sulfurreducens (strain ATCC 51573 / DSM 12127 / PCA).